A 245-amino-acid polypeptide reads, in one-letter code: Pre-hexon-linking protein VIII (245 aa).

Residues 116–167 (LMVGRTEGRMQLAGGLTEGRVQLSGGFHGRPLVRGRSRRPPRWCGAELTGNG) constitute a propeptide that is removed on maturation.

This sequence belongs to the adenoviridae hexon-linking protein family. As to quaternary structure, interacts with the peripentonal hexons as well as the hexons in the facets. Part of a complex composed of the core-capsid bridging protein, the endosome lysis protein VI and the hexon-linking protein VIII; these interactions bridge the virus core to the capsid. Post-translationally, cleaved by the viral protease during virion maturation. May cause the middle segment to be shed from the capsid.

It localises to the virion. Its subcellular location is the host nucleus. Structural component of the virion that acts as a cement protein on the capsid interior and which glue the peripentonal hexons and group-of-nine hexons together. The polypeptide is Pre-hexon-linking protein VIII (Galliformes (FAdV-1)).